Reading from the N-terminus, the 203-residue chain is uncharacterized protein (203 aa).

An N-terminal signal peptide occupies residues 1–20; sequence MDELILPILILLFLVFVAYF.

This is an uncharacterized protein from Pasteurella multocida (strain Pm70).